The following is a 464-amino-acid chain: Argininosuccinate lyase (464 aa).

Belongs to the lyase 1 family. Argininosuccinate lyase subfamily.

The protein localises to the cytoplasm. It carries out the reaction 2-(N(omega)-L-arginino)succinate = fumarate + L-arginine. Its pathway is amino-acid biosynthesis; L-arginine biosynthesis; L-arginine from L-ornithine and carbamoyl phosphate: step 3/3. In Pseudomonas syringae pv. tomato (strain ATCC BAA-871 / DC3000), this protein is Argininosuccinate lyase.